We begin with the raw amino-acid sequence, 345 residues long: MDNVIGLEIIEVVEQAAIASARWMGKGEKNTADEVAVEAMRERMNKIHMRGRIVIGEGERDEAPMLYIGEEVGICTQPDAKKMCEVEQLIEIDIAVDPCEGTNLVAYGQNGSMAVLAISEKGGLLAAPDVYMKKLAAPAVAKNHVDINKSATENLKIISECMDRAVEELVVVVMDRPRHKQLISEIRQAGARVRLISDGDVSAAISCAFAGTNIHALMGIGAAPEGVISAAAMRALGGHFQGQLIYDPAIVKTGLIGESKEDNMKRLKDMGIEDPDKVYNAEELASGETVLFAACGITPGTLMEGVRFFPNGARTQSLVISSQSKTARFVDTVHMFGETKTLQLK.

Aspartate 33, glutamate 57, aspartate 97, and glutamate 100 together coordinate Mn(2+). Substrate contacts are provided by residues 100 to 102 (EGT), tyrosine 131, 176 to 178 (RPR), and 198 to 200 (DGD). Glutamate 225 serves as a coordination point for Mn(2+).

Belongs to the FBPase class 2 family. As to quaternary structure, homotetramer. Mn(2+) is required as a cofactor.

The catalysed reaction is beta-D-fructose 1,6-bisphosphate + H2O = beta-D-fructose 6-phosphate + phosphate. It carries out the reaction D-sedoheptulose 1,7-bisphosphate + H2O = D-sedoheptulose 7-phosphate + phosphate. It functions in the pathway carbohydrate biosynthesis; Calvin cycle. In terms of biological role, catalyzes the hydrolysis of fructose 1,6-bisphosphate (Fru 1,6-P2) and sedoheptulose 1,7-bisphosphate (Sed 1,7-P2) to fructose 6-phosphate and sedoheptulose 7-phosphate, respectively. In Trichodesmium erythraeum (strain IMS101), this protein is D-fructose 1,6-bisphosphatase class 2/sedoheptulose 1,7-bisphosphatase.